Reading from the N-terminus, the 1107-residue chain is Probable chromatin-remodeling complex ATPase chain (1107 aa).

Disordered stretches follow at residues 1 to 124 (MAKP…KREK) and 177 to 217 (GNQS…GSGG). Acidic residues-rich tracts occupy residues 8-25 (DEEE…EEQS), 33-43 (GEEEDEEEEEA), 53-65 (GGEE…EEIE), and 89-114 (EGDE…DEAE). Residues 121–147 (KREKARLKEMQKLKKQKIQEILDTQNA) are a coiled coil. The segment covering 183–193 (KKPRGRGRHAS) has biased composition (basic residues). The span at 197 to 211 (EEEEDEEYLKEEEDA) shows a compositional bias: acidic residues. Residues 243–408 (IRLYENGING…WSLLNFLLPE (166 aa)) enclose the Helicase ATP-binding domain. Residue 256 to 263 (DEMGLGKT) participates in ATP binding. A DEAH box motif is present at residues 359 to 362 (DEAH). In terms of domain architecture, Helicase C-terminal spans 536-687 (LLDKLLPKLK…ALVIQQGRLA (152 aa)). SANT domains follow at residues 877–929 (EGFA…ERYK) and 978–1039 (QNKG…DTLI). Residues 1029-1067 (QELARRCDTLIRLVEKENQEYDEQERQARKDKRMAKNMT) are a coiled coil. The segment at 1049-1107 (YDEQERQARKDKRMAKNMTPTKRSALRVSEGETTPSNSFKRRRQSLMDDYVGSGRRKRG) is disordered.

The protein belongs to the SNF2/RAD54 helicase family. ISWI subfamily.

It is found in the nucleus. Its function is as follows. Possesses intrinsic ATP-dependent nucleosome-remodeling activity. Constitutes the catalytic subunit of several complexes capable of forming ordered nucleosome arrays on chromatin in vitro. The polypeptide is Probable chromatin-remodeling complex ATPase chain (Oryza sativa subsp. japonica (Rice)).